A 277-amino-acid chain; its full sequence is MKKTQQKEIENVTNITGVRQIELWRRDDLQHPRLDEVAEEVPVALVYNGISHVVMMASPKDLEYFALGFSLSEGIIESPRDIFGMDVVPSCNGLEVQIELSSRRFMGLKERRRALAGRTGCGVCGVEQLNDIGKPVQPLPFTQTFDLNKLDDALRHLNDFQPVGQLTSCTHAAAWMLPSGELVGGHEDVGRHVALDKLLGRRSQEGESWQQGAVLVSSRASYEMVQKSAMCGVEILFAVSAATTLAVEVAERCNLTLVGFCKPGRATVYTHPQRLSN.

The Cysteine persulfide intermediate role is filled by C121. 260-265 (FCKPGR) contacts Mo-bis(molybdopterin guanine dinucleotide).

It belongs to the FdhD family.

It is found in the cytoplasm. In terms of biological role, required for formate dehydrogenase (FDH) activity. Acts as a sulfur carrier protein that transfers sulfur from IscS to the molybdenum cofactor prior to its insertion into FDH. The chain is Sulfur carrier protein FdhD from Shigella dysenteriae serotype 1 (strain Sd197).